The sequence spans 147 residues: MNVKKITSEQDLHTAFEIRKAVFVEEQGCPISDEFDEFDTLHGDCQHILAYHQNVPVGTARVRIVGHTGKLERICILKSYRKFGLGKVIVDALERIVKEQGISAFKLHGQTQAAGFYEKLGYRTASEEFMLDGIPHVLMTKQDDSAL.

One can recognise an N-acetyltransferase domain in the interval M1–D144. CoA is bound by residues I74–I76 and G115–Y117.

This sequence belongs to the UPF0039 (ElaA) family.

In terms of biological role, could catalyze the transfer of an acetyl group from acetyl coenzyme A (AcCoA) to an acceptor substrate and release both CoA and the acetylated product. This Bacillus subtilis (strain 168) protein is Putative acetyltransferase BSU40680 (yybD).